The sequence spans 179 residues: Large ribosomal subunit protein uL5 (179 aa).

Belongs to the universal ribosomal protein uL5 family. As to quaternary structure, part of the 50S ribosomal subunit; part of the 5S rRNA/L5/L18/L25 subcomplex. Contacts the 5S rRNA and the P site tRNA. Forms a bridge to the 30S subunit in the 70S ribosome.

Functionally, this is one of the proteins that bind and probably mediate the attachment of the 5S RNA into the large ribosomal subunit, where it forms part of the central protuberance. In the 70S ribosome it contacts protein S13 of the 30S subunit (bridge B1b), connecting the 2 subunits; this bridge is implicated in subunit movement. Contacts the P site tRNA; the 5S rRNA and some of its associated proteins might help stabilize positioning of ribosome-bound tRNAs. The sequence is that of Large ribosomal subunit protein uL5 from Halalkalibacterium halodurans (strain ATCC BAA-125 / DSM 18197 / FERM 7344 / JCM 9153 / C-125) (Bacillus halodurans).